The primary structure comprises 147 residues: Transcriptional regulator MraZ (147 aa).

2 consecutive SpoVT-AbrB domains span residues 5 to 51 and 80 to 123; these read GTPV…PQPV and ACDV…DSEK.

The protein belongs to the MraZ family. As to quaternary structure, forms oligomers.

The protein localises to the cytoplasm. Its subcellular location is the nucleoid. The chain is Transcriptional regulator MraZ from Nitrosospira multiformis (strain ATCC 25196 / NCIMB 11849 / C 71).